The primary structure comprises 713 residues: F-box/WD repeat-containing protein 7 (713 aa).

Residues 1–150 are disordered; it reads MNQELLSVGS…DEHTHNSNVT (150 aa). S26 bears the Phosphoserine mark. Residues 46–55 are compositionally biased toward basic and acidic residues; sequence RHQEEEHTAR. Residues 69 to 84 show a composition bias toward polar residues; the sequence is QNDSQQGQVEENNNRF. The segment covering 87–135 has biased composition (acidic residues); the sequence is VDEDSSGNQEEQEEDEEHAGEQEEEEEEEEEEEEEEEMDQESDDFDQSD. A coiled-coil region spans residues 94 to 136; it reads NQEEQEEDEEHAGEQEEEEEEEEEEEEEEEMDQESDDFDQSDD. A compositionally biased stretch (basic and acidic residues) spans 136-145; it reads DSSREDEHTH. Position 211 is a phosphothreonine (T211). S233 carries the post-translational modification Phosphoserine. Positions 284 to 330 constitute an F-box domain; it reads RDFISLLPKELALYVLSFLEPKDLLQAAQTCRYWRILAEDNLLWREK. WD repeat units lie at residues 384-424, 426-462, 465-504, 506-542, 545-584, 586-624, and 628-665; these read GHDD…RTLV, HTGGVWSSQMRDNIIISGSTDRTLKVWNAETGECIHT, GHTSTVRCMHLHEKRVVSGSRDATLRVWDIETGQCLHVLM, HVAAVRCVQYDGRRVVSGAYDFMVKVWDPETETCLHT, GHTNRVYSLQFDGIHVVSGSLDTSIRVWDVETGNCIHTLT, HQSLTSGMELKDNILVSGNADSTVKIWDIKTGQCLQTLQ, and KHQSAVTCLQFNKNFVITSSDDGTVKLWDLKTGEFIRN.

In terms of assembly, homodimer; homodimerization plays a role in substrate binding and/or ubiquitination and degradation. Component of the SCF(FBXW7) complex consisting of CUL1, RBX1, SKP1 and FBXW7. Interacts (via F-box domain) with SKP1. Interacts (via F-box domain) with pseudophosphatase STYX; the interaction is direct and prevents FBXW7 interaction with SKP1. Interacts with cyclin-E (CCNE1 or CCNE2). Interacts with PSEN1. Forms a trimeric complex with NOTCH1 and SGK1. Interacts with NOTCH1 intracellular domain/NICD and NOTCH4 intracellular domain/NICD. Interacts with NOTCH2 intracellular domain (N2ICD). Interacts with MYC (when phosphorylated). Interacts with USP28, counteracting ubiquitination of MYC. Interacts (when phosphorylated at Thr-211) with PIN1, disrupting FBXW7 dimerization and promoting FBXW7 autoubiquitination and degradation. Interacts with UBE2QL1. Interacts with FAM83D; promotes FBXW7 degradation. Interacts with MYCN; FBXW7 competes with AURKA for binding to unphosphorylated MYCN but not for binding to phosphorylated MYCN. Interacts with JUN. Found in a complex with JUN and PRR7. Interacts with JUN and PRR7; the interaction inhibits ubiquitination-mediated JUN degradation, promoting its phosphorylation and transcriptional activity. Interacts with NFE2L1. Interacts with NR1D1. Interacts with RICTOR; mediates RICTOR ubiquitination and degradation. Phosphorylation at Thr-211 promotes interaction with PIN1, leading to disrupt FBXW7 dimerization and promoting FBXW7 autoubiquitination and degradation. Phosphorylated by ATM at Ser-26 in response to DNA damage, promoting recruitment to DNA damage sites and 'Lys-63'-linked ubiquitination of phosphorylated XRCC4. Post-translationally, ubiquitinated: autoubiquitinates following phosphorylation at Thr-211 and subsequent interaction with PIN1. Ubiquitination leads to its degradation.

Its subcellular location is the nucleus. The protein localises to the nucleoplasm. The protein resides in the chromosome. It functions in the pathway protein modification; protein ubiquitination. Its function is as follows. Substrate recognition component of a SCF (SKP1-CUL1-F-box protein) E3 ubiquitin-protein ligase complex which mediates the ubiquitination and subsequent proteasomal degradation of target proteins. Recognizes and binds phosphorylated sites/phosphodegrons within target proteins and thereafter brings them to the SCF complex for ubiquitination. Identified substrates include cyclin-E (CCNE1 or CCNE2), JUN, MYC, NOTCH1 released notch intracellular domain (NICD), NOTCH2, MCL1, MLST8, RICTOR and probably PSEN1. Acts as a negative regulator of JNK signaling by binding to phosphorylated JUN and promoting its ubiquitination and subsequent degradation. SCF(FBXW7) complex mediates the ubiquitination and subsequent degradation of NFE2L1. Involved in bone homeostasis and negative regulation of osteoclast differentiation. Regulates the amplitude of the cyclic expression of hepatic core clock genes and genes involved in lipid and glucose metabolism via ubiquitination and proteasomal degradation of their transcriptional repressor NR1D1; CDK1-dependent phosphorylation of NR1D1 is necessary for SCF(FBXW7)-mediated ubiquitination. Also able to promote 'Lys-63'-linked ubiquitination in response to DNA damage. The SCF(FBXW7) complex facilitates double-strand break repair following phosphorylation by ATM: phosphorylation promotes localization to sites of double-strand breaks and 'Lys-63'-linked ubiquitination of phosphorylated XRCC4, enhancing DNA non-homologous end joining. The chain is F-box/WD repeat-containing protein 7 from Rattus norvegicus (Rat).